The sequence spans 277 residues: Large ribosomal subunit protein uL2 (277 aa).

Disordered stretches follow at residues 37 to 60 (KNST…GHKH) and 223 to 264 (VVMN…NKRT). Polar residues predominate over residues 39–49 (STAGRNNNGHI). Basic residues predominate over residues 50–60 (TTRHKGGGHKH). A compositionally biased stretch (basic and acidic residues) spans 229 to 244 (DHPHGGGEGRTGEARE).

Belongs to the universal ribosomal protein uL2 family. Part of the 50S ribosomal subunit. Forms a bridge to the 30S subunit in the 70S ribosome.

Functionally, one of the primary rRNA binding proteins. Required for association of the 30S and 50S subunits to form the 70S ribosome, for tRNA binding and peptide bond formation. It has been suggested to have peptidyltransferase activity; this is somewhat controversial. Makes several contacts with the 16S rRNA in the 70S ribosome. The protein is Large ribosomal subunit protein uL2 of Neisseria meningitidis serogroup B (strain ATCC BAA-335 / MC58).